The following is a 61-amino-acid chain: Small ribosomal subunit protein uS14 (61 aa).

Zn(2+) contacts are provided by cysteine 24, cysteine 27, cysteine 40, and cysteine 43.

Belongs to the universal ribosomal protein uS14 family. Zinc-binding uS14 subfamily. In terms of assembly, part of the 30S ribosomal subunit. Contacts proteins S3 and S10. Requires Zn(2+) as cofactor.

In terms of biological role, binds 16S rRNA, required for the assembly of 30S particles and may also be responsible for determining the conformation of the 16S rRNA at the A site. The protein is Small ribosomal subunit protein uS14 of Streptococcus thermophilus (strain CNRZ 1066).